Here is a 405-residue protein sequence, read N- to C-terminus: Glucose-1-phosphate adenylyltransferase (405 aa).

Alpha-D-glucose 1-phosphate contacts are provided by residues Gly-164, 179–180 (EK), and Ser-197.

The protein belongs to the bacterial/plant glucose-1-phosphate adenylyltransferase family. As to quaternary structure, homotetramer.

The catalysed reaction is alpha-D-glucose 1-phosphate + ATP + H(+) = ADP-alpha-D-glucose + diphosphate. It functions in the pathway glycan biosynthesis; glycogen biosynthesis. Involved in the biosynthesis of ADP-glucose, a building block required for the elongation reactions to produce glycogen. Catalyzes the reaction between ATP and alpha-D-glucose 1-phosphate (G1P) to produce pyrophosphate and ADP-Glc. In Corynebacterium jeikeium (strain K411), this protein is Glucose-1-phosphate adenylyltransferase.